The sequence spans 727 residues: Prolyl endopeptidase-like (727 aa).

Active-site charge relay system residues include S559, D645, and H690.

It belongs to the peptidase S9A family. As to quaternary structure, homodimer. Interacts with the AP-1 complex.

It localises to the cytoplasm. The protein localises to the cytosol. Its subcellular location is the golgi apparatus. The protein resides in the trans-Golgi network. It is found in the cytoskeleton. It localises to the nucleus. Serine peptidase whose precise substrate specificity remains unclear. Does not cleave peptides after a arginine or lysine residue. Regulates trans-Golgi network morphology and sorting by regulating the membrane binding of the AP-1 complex. May play a role in the regulation of synaptic vesicle exocytosis. The polypeptide is Prolyl endopeptidase-like (PREPL) (Macaca fascicularis (Crab-eating macaque)).